The primary structure comprises 834 residues: MAPHWAVWLLAAGLWGLGIGAEMWWNLVPRKTVSSGELVTVVRRFSQTGIQDFLTLTLTEHSGLLYVGAREALFAFSVEALELQGAISWEAPAEKKIECTQKGKSNQTECFNFIRFLQPYNSSHLYVCGTYAFQPKCTYINMLTFTLDRAEFEDGKGKCPYDPAKGHTGLLVDGELYSATLNNFLGTEPVILRYMGTHHSIKTEYLAFWLNEPHFVGSAFVPESVGSFTGDDDKIYFFFSERAVEYDCYSEQVVARVARVCKGDMGGARTLQKKWTTFLKARLVCSAPDWKVYFNQLKAVHTLRGASWHNTTFFGVFQARWGDMDLSAVCEYQLEQIQQVFEGPYKEYSEQAQKWARYTDPVPSPRPGSCINNWHRDNGYTSSLELPDNTLNFIKKHPLMEDQVKPRLGRPLLVKKNTNFTHVVADRVPGLDGATYTVLFIGTGDGWLLKAVSLGPWIHMVEELQVFDQEPVESLVLSQSKKVLFAGSRSQLVQLSLADCTKYRFCVDCVLARDPYCAWNVNTSRCVATTSGRSGSFLVQHVANLDTSKMCNQYGIKKVRSIPKNITVVSGTDLVLPCHLSSNLAHAHWTFGSQDLPAEQPGSFLYDTGLQALVVMAAQSRHSGPYRCYSEEQGTRLAAESYLVAVVAGSSVTLEARAPLENLGLVWLAVVALGAVCLVLLLLVLSLRRRLREELEKGAKASERTLVYPLELPKEPASPPFRPGPETDEKLWDPVGYYYSDGSLKIVPGHARCQPGGGPPSPPPGIPGQPLPSPTRLHLGGGRNSNANGYVRLQLGGEDRGGSGHPLPELADELRRKLQQRQPLPDSNPEESSV.

Residues 1–20 (MAPHWAVWLLAAGLWGLGIG) form the signal peptide. The Extracellular portion of the chain corresponds to 21–664 (AEMWWNLVPR…EARAPLENLG (644 aa)). Residues 30–497 (RKTVSSGELV…SRSQLVQLSL (468 aa)) enclose the Sema domain. Residues 46 to 489 (SQTGIQDFLT…SKKVLFAGSR (444 aa)) form a dominant negative effect on myogenic differentiation region. Cysteine 99 and cysteine 110 are disulfide-bonded. N-linked (GlcNAc...) asparagine glycans are attached at residues asparagine 106 and asparagine 121. 3 disulfides stabilise this stretch: cysteine 128–cysteine 137, cysteine 261–cysteine 370, and cysteine 285–cysteine 330. N-linked (GlcNAc...) asparagine glycans are attached at residues asparagine 310 and asparagine 419. In terms of domain architecture, PSI spans 499 to 552 (DCTKYRFCVDCVLARDPYCAWNVNTSRCVATTSGRSGSFLVQHVANLDTSKMCN). Disulfide bonds link cysteine 500–cysteine 517 and cysteine 509–cysteine 526. 2 N-linked (GlcNAc...) asparagine glycosylation sites follow: asparagine 522 and asparagine 565. The Ig-like C2-type domain occupies 557–645 (KKVRSIPKNI…RLAAESYLVA (89 aa)). Cysteines 578 and 628 form a disulfide. A helical transmembrane segment spans residues 665–685 (LVWLAVVALGAVCLVLLLLVL). Residues 686-834 (SLRRRLREEL…PDSNPEESSV (149 aa)) are Cytoplasmic-facing. Serine 743 bears the Phosphoserine mark. The interval 749-834 (GHARCQPGGG…PDSNPEESSV (86 aa)) is disordered. Residues 757 to 773 (GGPPSPPPGIPGQPLPS) show a composition bias toward pro residues. The short motif at 831 to 834 (ESSV) is the PDZ-binding element.

This sequence belongs to the semaphorin family. In terms of assembly, interacts (via the PDZ-binding motif) with GIPC (via the PDZ domain). Interacts with NCDN. Interacts (via the PDZ-binding motif) with DLG4. Interacts with PLXNB2. In terms of tissue distribution, predominantly expressed in brain (at protein level).

It is found in the postsynaptic density membrane. It localises to the cytoplasmic vesicle. The protein localises to the secretory vesicle. Its subcellular location is the synaptic vesicle membrane. In terms of biological role, cell surface receptor for PLXNB2 that plays an important role in cell-cell signaling. PLXNB2 binding promotes downstream activation of RHOA and phosphorylation of ERBB2 at 'Tyr-1248'. Required for normal brain development, axon guidance and cell migration. Probable signaling receptor which may play a role in myogenic differentiation through activation of the stress-activated MAPK cascade. This chain is Semaphorin-4C (Sema4c), found in Mus musculus (Mouse).